We begin with the raw amino-acid sequence, 421 residues long: Tol-Pal system protein TolB (421 aa).

An N-terminal signal peptide occupies residues 1–16 (MRILVFLWLGLSSLFA).

The protein belongs to the TolB family. As to quaternary structure, the Tol-Pal system is composed of five core proteins: the inner membrane proteins TolA, TolQ and TolR, the periplasmic protein TolB and the outer membrane protein Pal. They form a network linking the inner and outer membranes and the peptidoglycan layer.

It localises to the periplasm. In terms of biological role, part of the Tol-Pal system, which plays a role in outer membrane invagination during cell division and is important for maintaining outer membrane integrity. The chain is Tol-Pal system protein TolB from Wolinella succinogenes (strain ATCC 29543 / DSM 1740 / CCUG 13145 / JCM 31913 / LMG 7466 / NCTC 11488 / FDC 602W) (Vibrio succinogenes).